We begin with the raw amino-acid sequence, 50 residues long: Large ribosomal subunit protein eL39 (50 aa).

The segment covering 1-12 (MGKKSKAKKKRL) has biased composition (basic residues). The interval 1 to 21 (MGKKSKAKKKRLGKLEKQNSR) is disordered.

Belongs to the eukaryotic ribosomal protein eL39 family.

This chain is Large ribosomal subunit protein eL39, found in Haloquadratum walsbyi (strain DSM 16790 / HBSQ001).